The sequence spans 611 residues: Chaperone protein DnaK (611 aa).

A Phosphothreonine; by autocatalysis modification is found at T172. A disordered region spans residues 575–611 (AAQAAQAQQDGGNESADKQDDNVVDADYEEVNDDDKK). Over residues 596–611 (NVVDADYEEVNDDDKK) the composition is skewed to acidic residues.

It belongs to the heat shock protein 70 family.

Its function is as follows. Acts as a chaperone. The chain is Chaperone protein DnaK from Shouchella clausii (strain KSM-K16) (Alkalihalobacillus clausii).